The chain runs to 294 residues: Protein farnesyltransferase/geranylgeranyltransferase type-1 subunit alpha (294 aa).

PFTA repeat units follow at residues 57–91, 92–125, 126–160, 161–194, and 199–233; these read YSLR…HTPS, YIDN…SLTK, NYER…NFND, YSQE…ETSK, and SLEE…KSGP.

Belongs to the protein prenyltransferase subunit alpha family. As to quaternary structure, heterodimer of an alpha(cwp1) and a beta(cpp1 or cwg2) subunit. Mg(2+) is required as a cofactor.

The catalysed reaction is L-cysteinyl-[protein] + (2E,6E)-farnesyl diphosphate = S-(2E,6E)-farnesyl-L-cysteinyl-[protein] + diphosphate. It carries out the reaction geranylgeranyl diphosphate + L-cysteinyl-[protein] = S-geranylgeranyl-L-cysteinyl-[protein] + diphosphate. In terms of biological role, catalyzes the transfer of a farnesyl or geranyl-geranyl moiety from farnesyl or geranyl-geranyl diphosphate to a cysteine at the fourth position from the C-terminus of several proteins having the C-terminal sequence Cys-aliphatic-aliphatic-X. The alpha(cwp1) subunit is thought to participate in a stable complex with the substrate. The beta(cpp1 or cwg2) subunits bind the peptide substrate. The chain is Protein farnesyltransferase/geranylgeranyltransferase type-1 subunit alpha (cwp1) from Schizosaccharomyces pombe (strain 972 / ATCC 24843) (Fission yeast).